The sequence spans 159 residues: MITKAIYPGTFDPITNGHLDLVTRASAMFSHVILAIADSSSKKPMFTLDERVALAKKVTALLKNVEVLGFSELMAEFAKKHNANILVRGLRSVSDFEYEWQLANMNRHLMPKLESVFLMPSEKWSFISSSLVKEVARHGGDITPFLPKPVTKALLAKLA.

Thr-10 contributes to the substrate binding site. Residues 10-11 (TF) and His-18 contribute to the ATP site. Residues Lys-42, Met-74, and Arg-88 each coordinate substrate. ATP is bound by residues 89-91 (GLR), Glu-99, and 124-130 (WSFISSS).

Belongs to the bacterial CoaD family. Homohexamer. Mg(2+) serves as cofactor.

It localises to the cytoplasm. It carries out the reaction (R)-4'-phosphopantetheine + ATP + H(+) = 3'-dephospho-CoA + diphosphate. Its pathway is cofactor biosynthesis; coenzyme A biosynthesis; CoA from (R)-pantothenate: step 4/5. In terms of biological role, reversibly transfers an adenylyl group from ATP to 4'-phosphopantetheine, yielding dephospho-CoA (dPCoA) and pyrophosphate. This chain is Phosphopantetheine adenylyltransferase, found in Yersinia pseudotuberculosis serotype I (strain IP32953).